Here is a 126-residue protein sequence, read N- to C-terminus: 5-carboxymethyl-2-hydroxymuconate Delta-isomerase (126 aa).

Residue P2 is the Proton acceptor; via imino nitrogen of the active site.

As to quaternary structure, homotrimer.

It carries out the reaction (2E,4Z)-5-hydroxypenta-2,4-diene-1,2,5-tricarboxylate = (3E,5R)-5-carboxy-2-oxohept-3-enedioate. It functions in the pathway aromatic compound metabolism; 4-hydroxyphenylacetate degradation; pyruvate and succinate semialdehyde from 4-hydroxyphenylacetate: step 4/7. Its function is as follows. Transforms 5-carboxymethyl-2-hydroxy-muconic acid (CHM) into 5-oxo-pent-3-ene-1,2,5-tricarboxylic acid (OPET). In Escherichia coli, this protein is 5-carboxymethyl-2-hydroxymuconate Delta-isomerase (hpcD).